The chain runs to 121 residues: Small ribosomal subunit protein uS13 (121 aa).

The disordered stretch occupies residues Pro96 to Lys121. Over residues Ala106–Lys121 the composition is skewed to basic residues.

It belongs to the universal ribosomal protein uS13 family. As to quaternary structure, part of the 30S ribosomal subunit. Forms a loose heterodimer with protein S19. Forms two bridges to the 50S subunit in the 70S ribosome.

Its function is as follows. Located at the top of the head of the 30S subunit, it contacts several helices of the 16S rRNA. In the 70S ribosome it contacts the 23S rRNA (bridge B1a) and protein L5 of the 50S subunit (bridge B1b), connecting the 2 subunits; these bridges are implicated in subunit movement. Contacts the tRNAs in the A and P-sites. The polypeptide is Small ribosomal subunit protein uS13 (Streptococcus suis (strain 05ZYH33)).